The chain runs to 173 residues: Large ribosomal subunit protein uL10 (173 aa).

Belongs to the universal ribosomal protein uL10 family. In terms of assembly, part of the ribosomal stalk of the 50S ribosomal subunit. The N-terminus interacts with L11 and the large rRNA to form the base of the stalk. The C-terminus forms an elongated spine to which L12 dimers bind in a sequential fashion forming a multimeric L10(L12)X complex.

Functionally, forms part of the ribosomal stalk, playing a central role in the interaction of the ribosome with GTP-bound translation factors. In Bifidobacterium animalis subsp. lactis (strain AD011), this protein is Large ribosomal subunit protein uL10.